The sequence spans 138 residues: Small ribosomal subunit protein uS11c (138 aa).

Residues Met-1–Gln-21 form a disordered region. Positions Gly-9–Gln-21 are enriched in basic residues.

Belongs to the universal ribosomal protein uS11 family. In terms of assembly, part of the 30S ribosomal subunit.

It localises to the plastid. Its subcellular location is the chloroplast. In Cicer arietinum (Chickpea), this protein is Small ribosomal subunit protein uS11c.